We begin with the raw amino-acid sequence, 69 residues long: Putative membrane protein insertion efficiency factor (69 aa).

This sequence belongs to the UPF0161 family.

The protein resides in the cell membrane. Its function is as follows. Could be involved in insertion of integral membrane proteins into the membrane. In Clostridium kluyveri (strain NBRC 12016), this protein is Putative membrane protein insertion efficiency factor.